The following is a 103-amino-acid chain: MLLTTTDVLQGREVERYLGIVTAEVVYGTNVLRDFLASLRNIIGGRTRTYEEVLENAQKKVLEELEQRAKRLGANGILGVSIHTNMSATMILVTAAGTAVKLR.

The protein belongs to the UPF0145 family.

The protein is UPF0145 protein CYA_2258 of Synechococcus sp. (strain JA-3-3Ab) (Cyanobacteria bacterium Yellowstone A-Prime).